Reading from the N-terminus, the 511-residue chain is L-arabinose isomerase (511 aa).

Residues E316, E343, H360, and H459 each coordinate Mn(2+).

It belongs to the arabinose isomerase family. Requires Mn(2+) as cofactor.

It catalyses the reaction beta-L-arabinopyranose = L-ribulose. It participates in carbohydrate degradation; L-arabinose degradation via L-ribulose; D-xylulose 5-phosphate from L-arabinose (bacterial route): step 1/3. Its function is as follows. Catalyzes the conversion of L-arabinose to L-ribulose. The polypeptide is L-arabinose isomerase (Arthrobacter sp. (strain FB24)).